A 160-amino-acid polypeptide reads, in one-letter code: Flavodoxin (160 aa).

One can recognise a Flavodoxin-like domain in the interval isoleucine 3–alanine 153.

Belongs to the flavodoxin family. Requires FMN as cofactor.

Functionally, low-potential electron donor to a number of redox enzymes. The chain is Flavodoxin (floX) from Clostridium saccharobutylicum.